We begin with the raw amino-acid sequence, 563 residues long: Urocanate hydratase (563 aa).

NAD(+)-binding positions include 53–54, Q131, 177–179, E197, R202, 243–244, 264–268, 274–275, and Y323; these read GG, GMG, NA, QTSAH, and YL. C411 is a catalytic residue. G493 lines the NAD(+) pocket.

Belongs to the urocanase family. Requires NAD(+) as cofactor.

The protein localises to the cytoplasm. The enzyme catalyses 4-imidazolone-5-propanoate = trans-urocanate + H2O. The protein operates within amino-acid degradation; L-histidine degradation into L-glutamate; N-formimidoyl-L-glutamate from L-histidine: step 2/3. Functionally, catalyzes the conversion of urocanate to 4-imidazolone-5-propionate. The chain is Urocanate hydratase from Yersinia enterocolitica serotype O:8 / biotype 1B (strain NCTC 13174 / 8081).